We begin with the raw amino-acid sequence, 185 residues long: Elongation factor P 1 (185 aa).

Belongs to the elongation factor P family.

Its subcellular location is the cytoplasm. It participates in protein biosynthesis; polypeptide chain elongation. In terms of biological role, involved in peptide bond synthesis. Stimulates efficient translation and peptide-bond synthesis on native or reconstituted 70S ribosomes in vitro. Probably functions indirectly by altering the affinity of the ribosome for aminoacyl-tRNA, thus increasing their reactivity as acceptors for peptidyl transferase. The chain is Elongation factor P 1 (efp1) from Chlamydia caviae (strain ATCC VR-813 / DSM 19441 / 03DC25 / GPIC) (Chlamydophila caviae).